Consider the following 861-residue polypeptide: MFNRKRRGDFDEDENYRDFRPRMPKRQRIPPVVQLCKEMMPDIRTIGESVKAFEDDIKFLSEAIMNEYGHEDYFNNALLSTLNAVVVEQPQKQAAIALLTMVVNSKNNVAGKSIINYFFEELQKWCKQTYNDEFKSTSNETGPWNKIKLILRFLSILSPMFLVDELINIYKSLFELSIELNNLDPGNRVPLSEAIYTNTLLNIPYLFFFNRNNDGLRTKVEELLAYVEQNYLVKTTDINLLREYNGEPPYEMVELVRVVLPNVKKALINNLEQLNELFPDWNHLLTPQTGDEGFNDALTLPSVDDLKSFVRLNKNFGSVDSMWKTPRYAFHVYLPNSAGNFETVVPISTYAGQLFNDIIIDLVESLEFNRKEVARQVITLDLFFKAGIFTEPGESIAQLIATYEENPLAPTFKIEDLAIETILGLIFKLPSVSQPFAYFYTLLVDICQNSPKAIAPVFGRAFRFFYSHLDSLDFELKLRYLDWFSIQMSNFNFSWKWNEWEDDSIKFGKYFYNPKVNFAKNLIQKELRLTSNFSEVEDSLPQEFTKYLDTSYIPRDQLINYYQSLFTGYTVEEDSVRKNDLYFRQEGVPMENTVRKILDYTHKANNSREVTELESILGELKNEYGSIISDFNRFVIILLVQAVTDSGSRSLSHANKYINDLKEDLKTIFAKIELDIETKEYIIIEAVLTFWNANPQTGFLVADAFKYAGLLTSRTIFTFIFNETGLKNNGLIEATAIEAVFRNLSQQISEENESGNNFEFVFERLCTIANSTIDLLDVNADEDIEIPKVNGEMDIDDIEDDKLDLKWKYFTVIGFIKSILRRYSHEYRELADKFIANIDNAIPHESTRRTISNWIQETKEV.

Residues 22-30 (RMPKRQRIP) carry the Nuclear localization signal motif. Positions 36–264 (CKEMMPDIRT…LVRVVLPNVK (229 aa)) constitute an MIF4G domain.

It belongs to the NCBP1 family. As to quaternary structure, component of the nuclear cap-binding complex (CBC), a heterodimer composed of STO1/CBC1 and CBC2 that interacts with capped RNAs. The complex interacts strongly with the importin subunit alpha SRP1. The SRP1-CBC trimer also binds to capped RNAs, but formation of the importin alpha/beta heterodimer upon binding of KAP95 to SRP1 in the cytoplasm causes dissociation of CBC from the RNA. The CBC complex is part of the commitment complex 1 (CC1), binding to the cap of pre-mRNA and interacting with U1 snRNP subunits MUD2 and SNU56. The CBC complex is part of the NRD1 complex, composed of CBC2, NAB1, NRD1, SEN1 and STO1/CBC2. The CBC complex also interacts with NPL3 and eIF4G (TIF4631 and TIF4632).

The protein localises to the nucleus. It is found in the cytoplasm. It localises to the perinuclear region. Functionally, component of the CBC complex, which binds co-transcriptionally to the 5'-cap of pre-mRNAs and is involved in maturation, export and degradation of nuclear mRNAs. The CBC complex is required for efficient pre-mRNA splicing through efficient commitment complex and spliceosome formation. Together with NPL3, the CBC complex is required for export of mRNAs out of the nucleus. The CBC complex is also involved in nuclear mRNA degradation, probably by directing the mRNAs to the sites of degradation. Affects replication of the positive-strand RNA virus BMV. This chain is Nuclear cap-binding protein complex subunit 1 (STO1), found in Saccharomyces cerevisiae (strain ATCC 204508 / S288c) (Baker's yeast).